The sequence spans 135 residues: Large ribosomal subunit protein uL16c (135 aa).

The protein belongs to the universal ribosomal protein uL16 family. Part of the 50S ribosomal subunit.

The protein localises to the plastid. It is found in the chloroplast. The sequence is that of Large ribosomal subunit protein uL16c from Panax ginseng (Korean ginseng).